Reading from the N-terminus, the 457-residue chain is MEKPWSGRFKEETDKFVEDFTESVSFDKELAFEDIEQDIAHVKTLQKAGILTEEEARELIQELLKIKEEIKEGKFQWKKELEDVHMNIEAELINRLGDVGRKLHTARSRNDQVATDEKLYLKKEIKEVLQLLKELRKTLVELAETTVDFVMPSYTHLQRAQPIRVAHYFLAYREILLKDSERLMDTYRRVDELPLGSGAVAGVDFPLDRFYTAELLGFNRVTRNSMYATAERDFIIEFLSNCALIAQHLSRLAEDLIIWNTEEFNFVELPDKLCTGSSIMPQKKNPDVLELIRGKTGRIYGNLIALLTTMKALPMAYNRDMQEDKEPLFDTLKNLKNMIKGMTLVLSDLRVKEQNMRKASGNFLLITDIANYLVEKGVPFRTAHHIAGSIVAYLLEKGKKLEEMTLEEFKQFSEKFEEDVFDILSPERAADRKRVYGGTAKEEILRIIEVAKAEEGL.

This sequence belongs to the lyase 1 family. Argininosuccinate lyase subfamily.

Its subcellular location is the cytoplasm. The enzyme catalyses 2-(N(omega)-L-arginino)succinate = fumarate + L-arginine. Its pathway is amino-acid biosynthesis; L-arginine biosynthesis; L-arginine from L-ornithine and carbamoyl phosphate: step 3/3. The protein is Argininosuccinate lyase of Aquifex aeolicus (strain VF5).